The following is a 90-amino-acid chain: Major mite allergen Der p 23 (90 aa).

A signal peptide spans Met-1–Ala-21. Positions Ala-22 to Asp-42 are disordered. Positions Thr-30 to Glu-39 are enriched in low complexity. The 47-residue stretch at Lys-44–Thr-90 folds into the Chitin-binding type-2 domain. Cystine bridges form between Cys-47–Cys-66 and Cys-76–Cys-89. An important for IgE-binding region spans residues Gly-52–Thr-90.

As to quaternary structure, monomer. Expressed in epithelial cells of the midgut.

The protein localises to the secreted. Its subcellular location is the endoplasmic reticulum. It is found in the cytoplasmic vesicle. Does not bind chitin in vitro. The protein is Major mite allergen Der p 23 of Dermatophagoides pteronyssinus (European house dust mite).